The following is an 80-amino-acid chain: U1-nemetoxin-Csp1a (80 aa).

The signal sequence occupies residues Met1–Ala20. A propeptide spanning residues Ala21 to Arg41 is cleaved from the precursor. Disulfide bonds link Cys42/Cys56, Cys49/Cys60, Cys55/Cys77, and Cys66/Cys73.

It belongs to the neurotoxin 13 (insecticidal toxin ABC) family. 02 (Calisoga) subfamily. As to expression, expressed by the venom gland.

Its subcellular location is the secreted. Its function is as follows. Causes paralysis to insect larvae (H.virescens). This toxin is active only on insects. The protein is U1-nemetoxin-Csp1a of Calisoga sp. (Spider).